Reading from the N-terminus, the 325-residue chain is Phenylalanine--tRNA ligase alpha subunit (325 aa).

Residue Glu251 coordinates Mg(2+).

The protein belongs to the class-II aminoacyl-tRNA synthetase family. Phe-tRNA synthetase alpha subunit type 1 subfamily. Tetramer of two alpha and two beta subunits. It depends on Mg(2+) as a cofactor.

It is found in the cytoplasm. It carries out the reaction tRNA(Phe) + L-phenylalanine + ATP = L-phenylalanyl-tRNA(Phe) + AMP + diphosphate + H(+). The protein is Phenylalanine--tRNA ligase alpha subunit (pheS) of Thermotoga maritima (strain ATCC 43589 / DSM 3109 / JCM 10099 / NBRC 100826 / MSB8).